Consider the following 517-residue polypeptide: Zinc finger protein 215 (517 aa).

The region spanning 48-126 is the SCAN box domain; it reads RQKFRHFQYL…EDMVTLIEDV (79 aa). The KRAB domain maps to 164 to 237; it reads VTFKDVVVEF…EKEIPRKTIF (74 aa). C2H2-type zinc fingers lie at residues 379–401, 407–429, 462–484, and 490–512; these read YECY…QIIH, YKCS…QKLH, YECV…QMIH, and FKCK…QKLH.

The protein belongs to the krueppel C2H2-type zinc-finger protein family.

It localises to the nucleus. May be involved in transcriptional regulation. This chain is Zinc finger protein 215 (ZNF215), found in Pongo abelii (Sumatran orangutan).